The primary structure comprises 336 residues: F420-dependent glucose-6-phosphate dehydrogenase (336 aa).

D39 contacts coenzyme F420-(gamma-Glu)n. H40 acts as the Proton donor in catalysis. Coenzyme F420-(gamma-Glu)n is bound by residues T76 and T107–G108. The active-site Proton acceptor is the E109. Coenzyme F420-(gamma-Glu)n contacts are provided by residues N112, G177–G178, and V180–V181. The substrate site is built by T195, K198, K259, and R283.

Belongs to the F420-dependent glucose-6-phosphate dehydrogenase family. As to quaternary structure, homodimer.

The catalysed reaction is oxidized coenzyme F420-(gamma-L-Glu)(n) + D-glucose 6-phosphate + H(+) = 6-phospho-D-glucono-1,5-lactone + reduced coenzyme F420-(gamma-L-Glu)(n). In terms of biological role, catalyzes the coenzyme F420-dependent oxidation of glucose 6-phosphate (G6P) to 6-phosphogluconolactone. Appears to have a role in resistance to oxidative stress, via its consumption of G6P that serves as a source of reducing power to combat oxidative stress in mycobacteria. Cannot use NAD, NADP, FAD or FMN instead of coenzyme F420 as an electron acceptor. Exhibits nearly no activity with D-mannose-6-phosphate or D-fructose-6-phosphate as substrate. The polypeptide is F420-dependent glucose-6-phosphate dehydrogenase (fgd) (Mycolicibacterium smegmatis (strain ATCC 700084 / mc(2)155) (Mycobacterium smegmatis)).